We begin with the raw amino-acid sequence, 227 residues long: Cytochrome c oxidase subunit 2 (227 aa).

The Mitochondrial intermembrane segment spans residues 1-14 (MAYPLQLGFQDAVS). Residues 15 to 45 (PIMEELLYFHDHTLMIVFLISSLVLYIITLM) form a helical membrane-spanning segment. Topologically, residues 46–59 (LTTKLTHTNTMNAQ) are mitochondrial matrix. A helical transmembrane segment spans residues 60-87 (EVETVWTILPAIILILIALPSLRILYMM). The Mitochondrial intermembrane segment spans residues 88 to 227 (DEINNPSLTV…TFEKWTASLL (140 aa)). 6 residues coordinate Cu cation: His-161, Cys-196, Glu-198, Cys-200, His-204, and Met-207. Glu-198 lines the Mg(2+) pocket.

Belongs to the cytochrome c oxidase subunit 2 family. As to quaternary structure, component of the cytochrome c oxidase (complex IV, CIV), a multisubunit enzyme composed of 14 subunits. The complex is composed of a catalytic core of 3 subunits MT-CO1, MT-CO2 and MT-CO3, encoded in the mitochondrial DNA, and 11 supernumerary subunits COX4I, COX5A, COX5B, COX6A, COX6B, COX6C, COX7A, COX7B, COX7C, COX8 and NDUFA4, which are encoded in the nuclear genome. The complex exists as a monomer or a dimer and forms supercomplexes (SCs) in the inner mitochondrial membrane with NADH-ubiquinone oxidoreductase (complex I, CI) and ubiquinol-cytochrome c oxidoreductase (cytochrome b-c1 complex, complex III, CIII), resulting in different assemblies (supercomplex SCI(1)III(2)IV(1) and megacomplex MCI(2)III(2)IV(2)). Found in a complex with TMEM177, COA6, COX18, COX20, SCO1 and SCO2. Interacts with TMEM177 in a COX20-dependent manner. Interacts with COX20. Interacts with COX16. The cofactor is Cu cation.

It is found in the mitochondrion inner membrane. The catalysed reaction is 4 Fe(II)-[cytochrome c] + O2 + 8 H(+)(in) = 4 Fe(III)-[cytochrome c] + 2 H2O + 4 H(+)(out). Component of the cytochrome c oxidase, the last enzyme in the mitochondrial electron transport chain which drives oxidative phosphorylation. The respiratory chain contains 3 multisubunit complexes succinate dehydrogenase (complex II, CII), ubiquinol-cytochrome c oxidoreductase (cytochrome b-c1 complex, complex III, CIII) and cytochrome c oxidase (complex IV, CIV), that cooperate to transfer electrons derived from NADH and succinate to molecular oxygen, creating an electrochemical gradient over the inner membrane that drives transmembrane transport and the ATP synthase. Cytochrome c oxidase is the component of the respiratory chain that catalyzes the reduction of oxygen to water. Electrons originating from reduced cytochrome c in the intermembrane space (IMS) are transferred via the dinuclear copper A center (CU(A)) of subunit 2 and heme A of subunit 1 to the active site in subunit 1, a binuclear center (BNC) formed by heme A3 and copper B (CU(B)). The BNC reduces molecular oxygen to 2 water molecules using 4 electrons from cytochrome c in the IMS and 4 protons from the mitochondrial matrix. The protein is Cytochrome c oxidase subunit 2 (MT-CO2) of Hippopotamus amphibius (Hippopotamus).